Reading from the N-terminus, the 115-residue chain is NAD(P)H-quinone oxidoreductase subunit M (115 aa).

It belongs to the complex I NdhM subunit family. In terms of assembly, NDH-1 can be composed of about 15 different subunits; different subcomplexes with different compositions have been identified which probably have different functions.

It is found in the cellular thylakoid membrane. The catalysed reaction is a plastoquinone + NADH + (n+1) H(+)(in) = a plastoquinol + NAD(+) + n H(+)(out). It carries out the reaction a plastoquinone + NADPH + (n+1) H(+)(in) = a plastoquinol + NADP(+) + n H(+)(out). Its function is as follows. NDH-1 shuttles electrons from an unknown electron donor, via FMN and iron-sulfur (Fe-S) centers, to quinones in the respiratory and/or the photosynthetic chain. The immediate electron acceptor for the enzyme in this species is believed to be plastoquinone. Couples the redox reaction to proton translocation, and thus conserves the redox energy in a proton gradient. Cyanobacterial NDH-1 also plays a role in inorganic carbon-concentration. The polypeptide is NAD(P)H-quinone oxidoreductase subunit M (Prochlorococcus marinus (strain MIT 9301)).